A 657-amino-acid polypeptide reads, in one-letter code: Threonine--tRNA ligase (657 aa).

Positions 1–62 constitute a TGS domain; the sequence is MALDITFPDG…AHSGQLQIMT (62 aa). A catalytic region spans residues 240 to 538; sequence DHRVIGRDLD…LTEIYKGAFP (299 aa). Positions 334, 385, and 515 each coordinate Zn(2+).

The protein belongs to the class-II aminoacyl-tRNA synthetase family. In terms of assembly, homodimer. The cofactor is Zn(2+).

It localises to the cytoplasm. The catalysed reaction is tRNA(Thr) + L-threonine + ATP = L-threonyl-tRNA(Thr) + AMP + diphosphate + H(+). Functionally, catalyzes the attachment of threonine to tRNA(Thr) in a two-step reaction: L-threonine is first activated by ATP to form Thr-AMP and then transferred to the acceptor end of tRNA(Thr). Also edits incorrectly charged L-seryl-tRNA(Thr). This chain is Threonine--tRNA ligase, found in Lacticaseibacillus paracasei (strain ATCC 334 / BCRC 17002 / CCUG 31169 / CIP 107868 / KCTC 3260 / NRRL B-441) (Lactobacillus paracasei).